The sequence spans 98 residues: NADH-ubiquinone oxidoreductase chain 4L (98 aa).

Helical transmembrane passes span Met1 to Ile21, Leu30 to Thr50, and Ile61 to Val81.

It belongs to the complex I subunit 4L family. Core subunit of respiratory chain NADH dehydrogenase (Complex I) which is composed of 45 different subunits.

The protein resides in the mitochondrion inner membrane. The enzyme catalyses a ubiquinone + NADH + 5 H(+)(in) = a ubiquinol + NAD(+) + 4 H(+)(out). Core subunit of the mitochondrial membrane respiratory chain NADH dehydrogenase (Complex I) which catalyzes electron transfer from NADH through the respiratory chain, using ubiquinone as an electron acceptor. Part of the enzyme membrane arm which is embedded in the lipid bilayer and involved in proton translocation. The chain is NADH-ubiquinone oxidoreductase chain 4L (MT-ND4L) from Chrysochloris asiatica (Cape golden mole).